Consider the following 284-residue polypeptide: Probable palmitoyltransferase ZDHHC24 (284 aa).

Topologically, residues 1–18 (MGEPWAARGTEGAPARMP) are cytoplasmic. A helical transmembrane segment spans residues 19-39 (VVFTALWAAVVVLELTYVMVL). Topologically, residues 40–52 (GPGPPPLEPLARA) are extracellular. A helical membrane pass occupies residues 53-73 (LQLALAAYQLLNLLGNMGLFL). Residues 74-137 (RSDPSIRGVM…GRCVGFHNYR (64 aa)) are Cytoplasmic-facing. The 51-residue stretch at 94–144 (AYCYQCQSQVPPRSGHCSACRVCILRRDHHCRLLGRCVGFHNYRPFLCLLL) folds into the DHHC domain. C124 acts as the S-palmitoyl cysteine intermediate in catalysis. The helical transmembrane segment at 138–158 (PFLCLLLHAAGVLLHISVLLS) threads the bilayer. The Extracellular segment spans residues 159–166 (PALSALLQ). Residues 167 to 187 (AHSALYTVALLLLPWLMLLTG) form a helical membrane-spanning segment. Over 188–195 (KVSLAQFA) the chain is Cytoplasmic. The chain crosses the membrane as a helical span at residues 196–216 (LAFVVDTCVAGALLCGAGLLF). The Extracellular portion of the chain corresponds to 217 to 284 (HGMLLLRGQT…TPTDVGLVTS (68 aa)).

This sequence belongs to the DHHC palmitoyltransferase family.

Its subcellular location is the membrane. The catalysed reaction is L-cysteinyl-[protein] + hexadecanoyl-CoA = S-hexadecanoyl-L-cysteinyl-[protein] + CoA. Probable palmitoyltransferase that could catalyze the addition of palmitate onto various protein substrates. In Rattus norvegicus (Rat), this protein is Probable palmitoyltransferase ZDHHC24 (Zdhhc24).